The following is a 425-amino-acid chain: Gamma-glutamyl phosphate reductase (425 aa).

Belongs to the gamma-glutamyl phosphate reductase family.

Its subcellular location is the cytoplasm. The enzyme catalyses L-glutamate 5-semialdehyde + phosphate + NADP(+) = L-glutamyl 5-phosphate + NADPH + H(+). It participates in amino-acid biosynthesis; L-proline biosynthesis; L-glutamate 5-semialdehyde from L-glutamate: step 2/2. Catalyzes the NADPH-dependent reduction of L-glutamate 5-phosphate into L-glutamate 5-semialdehyde and phosphate. The product spontaneously undergoes cyclization to form 1-pyrroline-5-carboxylate. This Aromatoleum aromaticum (strain DSM 19018 / LMG 30748 / EbN1) (Azoarcus sp. (strain EbN1)) protein is Gamma-glutamyl phosphate reductase.